Reading from the N-terminus, the 212-residue chain is Molybdenum cofactor guanylyltransferase (212 aa).

Residues 14–16 (LAG), Lys-27, Asn-55, Asp-73, and Asp-108 contribute to the GTP site. Position 108 (Asp-108) interacts with Mg(2+).

This sequence belongs to the MobA family. As to quaternary structure, monomer. Mg(2+) serves as cofactor.

The protein localises to the cytoplasm. The catalysed reaction is Mo-molybdopterin + GTP + H(+) = Mo-molybdopterin guanine dinucleotide + diphosphate. In terms of biological role, transfers a GMP moiety from GTP to Mo-molybdopterin (Mo-MPT) cofactor (Moco or molybdenum cofactor) to form Mo-molybdopterin guanine dinucleotide (Mo-MGD) cofactor. This is Molybdenum cofactor guanylyltransferase from Bradyrhizobium sp. (strain ORS 278).